A 330-amino-acid chain; its full sequence is Peroxidase N1 (330 aa).

The N-terminal stretch at 1-29 (MEYYHHSINKMAMFMVILVLAIDVTMVLG) is a signal peptide. Position 30 is a pyrrolidone carboxylic acid (Q30). 4 cysteine pairs are disulfide-bonded: C41-C117, C74-C79, C123-C326, and C201-C233. Residue H72 is the Proton acceptor of the active site. 5 residues coordinate Ca(2+): D73, V76, G78, D80, and S82. A substrate-binding site is contributed by P164. H194 contacts heme b. T195 contributes to the Ca(2+) binding site. N212 carries an N-linked (GlcNAc...) asparagine glycan. D246 and D254 together coordinate Ca(2+).

It belongs to the peroxidase family. Classical plant (class III) peroxidase subfamily. It depends on Ca(2+) as a cofactor. The cofactor is heme b. In terms of tissue distribution, expressed at a high level in roots and at a trace level in lower leaves. Not expressed in upper leaves, stems, flowers, seeds and shoot apices.

Its subcellular location is the secreted. It carries out the reaction 2 a phenolic donor + H2O2 = 2 a phenolic radical donor + 2 H2O. Its function is as follows. Removal of H(2)O(2), oxidation of toxic reductants, biosynthesis and degradation of lignin, suberization, auxin catabolism, response to environmental stresses such as wounding, pathogen attack and oxidative stress. These functions might be dependent on each isozyme/isoform in each plant tissue. Can use NADH, NADPH and monolignols as substrates. The protein is Peroxidase N1 of Nicotiana tabacum (Common tobacco).